We begin with the raw amino-acid sequence, 666 residues long: MSVRRLTVCIVGAGPRGLSVLERFCAHERKSASHPAVTVHVVDPARPGAGRVWRTGQPRQLLMNTVASQVTVFTDGSVDMAGPVEAGPSLHEWARELAALTPVEELLGGHDDATLAEARALGADSYPTRAFYGCYLEEMFRRVVCGAPAHLEVRVHRSTAVSLADETPGSGGAQSLLLADGTRLAGLDAVVLALGHVRAEEPGAPDPRAAALGLAHFPPANPADLDLSGIAPGTPVLLRGLGLNFFDHMALFTLGRGGAFSRRPHGLRYHPSGLEPRLYAGSRRGVPYHARGENEKGVDGRHTPLLLTPERIAELTGRHREGPGLSFLRTLWPLIAREVECVYYGTLLASRGRAAERDAFVTAYLAGGDDTDRGGVLERFGIGPADRWCWERTASPHPRHGFTGPDGHRRWLLEHLAQDVRRARAGNVSDPHKAALDVLRDLRNEIRLVVDHGGLDGLSHRDDLDGWYTGLNAFLSIGPPASRIEEMAALIEAGVLDVVGPGLEVDIDEADAAFVARSPLVPGRPVRAHVLIEARLPVTDLRRTADPLLRDLLRSGQCRSYRIPAGRAPEGYETGGLEVTRRPYRLVDALGRAHPRRFAFGVPTEAVHWVTAAGARPGVNSVTLGDADAIAHAVASLTPAAAPRLPAYEDPGVRCPSDDRLTEVTA.

The disordered stretch occupies residues 645-666 (LPAYEDPGVRCPSDDRLTEVTA). Residues 656 to 666 (PSDDRLTEVTA) are compositionally biased toward basic and acidic residues.

Belongs to the nitrosuccinic acid synthase family. The cofactor is FAD.

It carries out the reaction L-aspartate + 3 NADPH + 3 O2 + 2 H(+) = 2-nitrobutanedioate + 3 NADP(+) + 4 H2O. The protein operates within antibiotic biosynthesis. Its function is as follows. Part of a gene cluster involved in the biosynthesis of cremeomycin, a light-sensitive o-diazoquinone with antibacterial and antiproliferative effects. Catalyzes the iterative oxidation of L-aspartic acid to nitrosuccinic acid (2-nitrobutanedioate) via N-hydroxyaspartic acid and nitrososuccinic acid. In Streptomyces cremeus, this protein is L-aspartate N-monooxygenase (nitrosuccinate-forming).